The following is a 287-amino-acid chain: Ribosomal RNA small subunit methyltransferase A (287 aa).

Asparagine 18, leucine 20, glycine 45, glutamate 66, aspartate 91, and asparagine 118 together coordinate S-adenosyl-L-methionine.

Belongs to the class I-like SAM-binding methyltransferase superfamily. rRNA adenine N(6)-methyltransferase family. RsmA subfamily.

The protein localises to the cytoplasm. The catalysed reaction is adenosine(1518)/adenosine(1519) in 16S rRNA + 4 S-adenosyl-L-methionine = N(6)-dimethyladenosine(1518)/N(6)-dimethyladenosine(1519) in 16S rRNA + 4 S-adenosyl-L-homocysteine + 4 H(+). Specifically dimethylates two adjacent adenosines (A1518 and A1519) in the loop of a conserved hairpin near the 3'-end of 16S rRNA in the 30S particle. May play a critical role in biogenesis of 30S subunits. The sequence is that of Ribosomal RNA small subunit methyltransferase A from Haemophilus influenzae (strain PittEE).